The chain runs to 566 residues: Malate synthase, glyoxysomal (566 aa).

R182 acts as the Proton acceptor in catalysis. Residue D467 is the Proton donor of the active site. A Microbody targeting signal motif is present at residues 564–566 (SRL).

The protein belongs to the malate synthase family.

The protein localises to the glyoxysome. It carries out the reaction glyoxylate + acetyl-CoA + H2O = (S)-malate + CoA + H(+). Its pathway is carbohydrate metabolism; glyoxylate cycle; (S)-malate from isocitrate: step 2/2. This is Malate synthase, glyoxysomal from Cucurbita maxima (Pumpkin).